Reading from the N-terminus, the 138-residue chain is Transcriptional activator protein Pur-alpha (138 aa).

Position 70 is a phosphoserine (Ser-70).

Belongs to the PUR DNA-binding protein family. Homodimer, heterodimer with PURB and heterotrimer with PURB and YBX1/Y-box protein 1. Interacts with FMR1; this interaction occurs in association with polyribosome.

It is found in the nucleus. This is a probable transcription activator that specifically binds the purine-rich single strand of the PUR element located upstream of the c-Myc gene. May play a role in the initiation of DNA replication and in recombination. The chain is Transcriptional activator protein Pur-alpha from Rattus norvegicus (Rat).